The sequence spans 145 residues: Small ribosomal subunit protein uS9 (145 aa).

The protein belongs to the universal ribosomal protein uS9 family.

The protein localises to the cytoplasm. This is Small ribosomal subunit protein uS9 (RPS16) from Gossypium hirsutum (Upland cotton).